The chain runs to 237 residues: Dihydroceramide fatty acyl 2-hydroxylase FAH2 (237 aa).

2 helical membrane-spanning segments follow: residues 54-74 (VWWA…SISA) and 77-97 (GLTF…WTLL). 5 residues coordinate Zn(2+): His-102, His-107, His-123, His-126, and His-127. A run of 2 helical transmembrane segments spans residues 134–154 (LRLV…WKLL) and 156–176 (LLAT…GYVM). Positions 181, 185, 201, 204, and 205 each coordinate Zn(2+).

Belongs to the sterol desaturase family. Interacts with CYTB5-A, CYTB5-B, CYTB5-C and CYTB5-D. It depends on Zn(2+) as a cofactor. In terms of tissue distribution, expressed in leaves, roots, flowers and seeds.

It localises to the endoplasmic reticulum membrane. It carries out the reaction an N-(1,2-saturated acyl)sphinganine + 2 Fe(II)-[cytochrome b5] + O2 + 2 H(+) = an N-[(2'R)-hydroxyacyl]sphinganine + 2 Fe(III)-[cytochrome b5] + H2O. Its function is as follows. Fatty acid 2-hydroxylase involved in the alpha-hydroxylation of the long-chain fatty acid (LCFA) palmitic acid. Probably involved in the resistance response to oxidative stress. This chain is Dihydroceramide fatty acyl 2-hydroxylase FAH2, found in Arabidopsis thaliana (Mouse-ear cress).